Here is a 537-residue protein sequence, read N- to C-terminus: Chaperonin GroEL 2 (537 aa).

ATP contacts are provided by residues 29-32 (TLGP), 86-90 (DGTTT), Gly412, and Asp495.

This sequence belongs to the chaperonin (HSP60) family. Forms a cylinder of 14 subunits composed of two heptameric rings stacked back-to-back. Interacts with the co-chaperonin GroES.

Its subcellular location is the cytoplasm. It carries out the reaction ATP + H2O + a folded polypeptide = ADP + phosphate + an unfolded polypeptide.. Functionally, together with its co-chaperonin GroES, plays an essential role in assisting protein folding. The GroEL-GroES system forms a nano-cage that allows encapsulation of the non-native substrate proteins and provides a physical environment optimized to promote and accelerate protein folding. This Paenarthrobacter aurescens (strain TC1) protein is Chaperonin GroEL 2.